Consider the following 130-residue polypeptide: Small ribosomal subunit protein uS8 (130 aa).

It belongs to the universal ribosomal protein uS8 family. As to quaternary structure, part of the 30S ribosomal subunit.

One of the primary rRNA binding proteins, it binds directly to 16S rRNA central domain where it helps coordinate assembly of the platform of the 30S subunit. The sequence is that of Small ribosomal subunit protein uS8 from Thermococcus gammatolerans (strain DSM 15229 / JCM 11827 / EJ3).